The sequence spans 734 residues: Photosystem I P700 chlorophyll a apoprotein A2 (734 aa).

The next 8 membrane-spanning stretches (helical) occupy residues 46–69 (IFAS…FHVA), 135–158 (LYTG…LHLQ), 175–199 (LNHH…HVAI), 273–291 (IAHH…GHMY), 330–353 (IHFQ…QHMY), 369–395 (AALY…IFFI), 417–439 (AIIS…LYVH), and 517–535 (FLVH…LILV). [4Fe-4S] cluster-binding residues include cysteine 559 and cysteine 568. Transmembrane regions (helical) follow at residues 575-596 (AFYL…YWHW) and 643-665 (LSVW…MFLI). Chlorophyll a contacts are provided by histidine 654, methionine 662, and tyrosine 670. Residue tryptophan 671 coordinates phylloquinone. A helical membrane pass occupies residues 707-727 (LVGLAHFSVGYIFTYAAFLIA).

It belongs to the PsaA/PsaB family. As to quaternary structure, the PsaA/B heterodimer binds the P700 chlorophyll special pair and subsequent electron acceptors. PSI consists of a core antenna complex that captures photons, and an electron transfer chain that converts photonic excitation into a charge separation. The eukaryotic PSI reaction center is composed of at least 11 subunits. The cofactor is P700 is a chlorophyll a/chlorophyll a' dimer, A0 is one or more chlorophyll a, A1 is one or both phylloquinones and FX is a shared 4Fe-4S iron-sulfur center..

The protein resides in the plastid. It localises to the chloroplast thylakoid membrane. The enzyme catalyses reduced [plastocyanin] + hnu + oxidized [2Fe-2S]-[ferredoxin] = oxidized [plastocyanin] + reduced [2Fe-2S]-[ferredoxin]. Its function is as follows. PsaA and PsaB bind P700, the primary electron donor of photosystem I (PSI), as well as the electron acceptors A0, A1 and FX. PSI is a plastocyanin-ferredoxin oxidoreductase, converting photonic excitation into a charge separation, which transfers an electron from the donor P700 chlorophyll pair to the spectroscopically characterized acceptors A0, A1, FX, FA and FB in turn. Oxidized P700 is reduced on the lumenal side of the thylakoid membrane by plastocyanin. The chain is Photosystem I P700 chlorophyll a apoprotein A2 from Aethionema grandiflorum (Persian stone-cress).